The chain runs to 322 residues: MVVIMLNYDDIKIIDEIYSEGYLFAQYGIYIKKKFKQKIFKIPVDIGLGCPHKKNGGCIFCPEMGRPISVKYCSAKIPLKEQIKKQMENQKKKGFKKFYIYFYPGTNTYAPAEKLKEIWDFSLSYKEVIGLSIGTRPDCLEKEKLDILAEYVENGYDIWIDLGVQSMHQKTLEILNRGHDVSDIIKAIKDCHKRGIKVCGHVILGLPGESWKEMMETAKILSLLEIEAVKIYPLVVVKGTKLEEMYWKGEYRTLDENQYISLVCDFLEHLSPYVLIQRLSKDKVPESIKVSPEWYLGRLKIMNKVSEILKKRGTKQGARFFR.

Residues 34–286 (KFKQKIFKIP…QRLSKDKVPE (253 aa)) form the Radical SAM core domain. [4Fe-4S] cluster-binding residues include cysteine 50, cysteine 58, and cysteine 61.

It belongs to the radical SAM superfamily. It depends on [4Fe-4S] cluster as a cofactor.

This is an uncharacterized protein from Methanocaldococcus jannaschii (strain ATCC 43067 / DSM 2661 / JAL-1 / JCM 10045 / NBRC 100440) (Methanococcus jannaschii).